The sequence spans 287 residues: 2-dehydro-3-deoxyphosphooctonate aldolase (287 aa).

It belongs to the KdsA family.

It is found in the cytoplasm. The enzyme catalyses D-arabinose 5-phosphate + phosphoenolpyruvate + H2O = 3-deoxy-alpha-D-manno-2-octulosonate-8-phosphate + phosphate. Its pathway is carbohydrate biosynthesis; 3-deoxy-D-manno-octulosonate biosynthesis; 3-deoxy-D-manno-octulosonate from D-ribulose 5-phosphate: step 2/3. It functions in the pathway bacterial outer membrane biogenesis; lipopolysaccharide biosynthesis. This chain is 2-dehydro-3-deoxyphosphooctonate aldolase, found in Rhodopseudomonas palustris (strain ATCC BAA-98 / CGA009).